The primary structure comprises 246 residues: MAGHSQFSNIKHRKGAQDAKRSQKFTKLIREITVAAKQGLPDPELNPRLRSAIFAARKENLPKDKIETAIKNATGNVAGENYEEIQYEGHGPSGTALIVHVLTNNRNRTASEVRYIFSRKGGNLGETGSVSYLFDHVGLIVYKAEGVNFDDLFSHGIELEVLNVEENDKEGLHVITCEIKDFGKVRDAFYAKFGEPELARLSWQPKDLIEISDKELIDKLSALVEELEDNDDVQYVEGNFTFVDAV.

A disordered region spans residues 1 to 22; that stretch reads MAGHSQFSNIKHRKGAQDAKRS.

It belongs to the TACO1 family.

Its subcellular location is the cytoplasm. This Wolbachia pipientis wMel protein is Probable transcriptional regulatory protein WD_0484.